The following is a 343-amino-acid chain: L-threonine 3-dehydrogenase (343 aa).

Cys-38 is a binding site for Zn(2+). Residues Thr-40 and His-43 each act as charge relay system in the active site. His-63, Glu-64, Cys-93, Cys-96, Cys-99, and Cys-107 together coordinate Zn(2+). Residues Ile-175, Asp-195, Arg-200, 262–264 (LGI), and 286–287 (IY) each bind NAD(+).

The protein belongs to the zinc-containing alcohol dehydrogenase family. Homotetramer. Zn(2+) is required as a cofactor.

Its subcellular location is the cytoplasm. It carries out the reaction L-threonine + NAD(+) = (2S)-2-amino-3-oxobutanoate + NADH + H(+). The protein operates within amino-acid degradation; L-threonine degradation via oxydo-reductase pathway; glycine from L-threonine: step 1/2. Its function is as follows. Catalyzes the NAD(+)-dependent oxidation of L-threonine to 2-amino-3-ketobutyrate. The chain is L-threonine 3-dehydrogenase from Paraburkholderia xenovorans (strain LB400).